Consider the following 706-residue polypeptide: Septin ring organizing protein mid2 (706 aa).

Disordered stretches follow at residues serine 62–threonine 102 and aspartate 145–proline 180. 2 stretches are compositionally biased toward polar residues: residues tyrosine 81–serine 90 and asparagine 149–glycine 169. At serine 379 the chain carries Phosphoserine. Residues threonine 583–glycine 688 form the PH domain.

Belongs to the BUD4 family.

Its subcellular location is the cytoplasm. The protein localises to the cell cortex. The protein resides in the cytoskeleton. Functionally, responsible for the proper stability and function of septins during cytokinesis. Required for the correct formation of the medial septin ring structure in mitosis and for the proper localization of endo-glucanases agn1 and eng1, which are needed for efficient cell separation. May act as a landmark for the localization of hydrolytic proteins to the medial region. This Schizosaccharomyces pombe (strain 972 / ATCC 24843) (Fission yeast) protein is Septin ring organizing protein mid2 (mid2).